We begin with the raw amino-acid sequence, 29 residues long: Cyclotide vibi-D (29 aa).

A cross-link (cyclopeptide (Gly-Asn)) is located at residues 1–29 (GLPVCGETCFGGRCNTPGCTCSYPICTRN). Intrachain disulfides connect Cys-5–Cys-19, Cys-9–Cys-21, and Cys-14–Cys-26.

Post-translationally, this is a cyclic peptide.

Probably participates in a plant defense mechanism. Has moderate levels of cytotoxic activity, active against a human lymphoma cell line with an IC(50) of &gt;30 uM. This Viola biflora (Yellow wood violet) protein is Cyclotide vibi-D.